The following is a 398-amino-acid chain: 1-deoxy-D-xylulose 5-phosphate reductoisomerase (398 aa).

The NADPH site is built by Thr11, Gly12, Ser13, Ile14, Arg38, Asn39, and Asn125. Lys126 lines the 1-deoxy-D-xylulose 5-phosphate pocket. Position 127 (Glu127) interacts with NADPH. Asp151 contributes to the Mn(2+) binding site. Residues Ser152, Glu153, Ser179, and His202 each contribute to the 1-deoxy-D-xylulose 5-phosphate site. Glu153 contributes to the Mn(2+) binding site. Gly208 contacts NADPH. Residues Ser215, Asn220, Lys221, and Glu224 each coordinate 1-deoxy-D-xylulose 5-phosphate. Position 224 (Glu224) interacts with Mn(2+).

This sequence belongs to the DXR family. The cofactor is Mg(2+). Mn(2+) is required as a cofactor.

It catalyses the reaction 2-C-methyl-D-erythritol 4-phosphate + NADP(+) = 1-deoxy-D-xylulose 5-phosphate + NADPH + H(+). The protein operates within isoprenoid biosynthesis; isopentenyl diphosphate biosynthesis via DXP pathway; isopentenyl diphosphate from 1-deoxy-D-xylulose 5-phosphate: step 1/6. In terms of biological role, catalyzes the NADPH-dependent rearrangement and reduction of 1-deoxy-D-xylulose-5-phosphate (DXP) to 2-C-methyl-D-erythritol 4-phosphate (MEP). This chain is 1-deoxy-D-xylulose 5-phosphate reductoisomerase, found in Burkholderia lata (strain ATCC 17760 / DSM 23089 / LMG 22485 / NCIMB 9086 / R18194 / 383).